The chain runs to 573 residues: Chromosomal replication initiator protein DnaA (573 aa).

Residues 1–85 (MSQNSSSLLE…TKVLSMRMGR (85 aa)) form a domain I, interacts with DnaA modulators region. Residues 85 to 231 (RSFSLAVSVE…TPAHNPNREV (147 aa)) are domain II. Residues 91-232 (VSVEPSRDGE…PAHNPNREVS (142 aa)) are disordered. The span at 116-169 (PYPGQGPQSPQGQQGQQGQHPVQQEVRAHAPAPHQQGQHQAAQHQPPANQAPGQ) shows a compositional bias: low complexity. Over residues 178–191 (QASQSAGAWEQTHS) the composition is skewed to polar residues. Over residues 202–213 (SPAPVEPPPQPA) the composition is skewed to pro residues. Residues 232-448 (SLNPKYTFEN…GALIRVSAYS (217 aa)) are domain III, AAA+ region. Gly-276, Gly-278, Lys-279, and Thr-280 together coordinate ATP. The segment at 449 to 573 (SLINQPIDKE…TQLIKSRGRN (125 aa)) is domain IV, binds dsDNA.

The protein belongs to the DnaA family. In terms of assembly, oligomerizes as a right-handed, spiral filament on DNA at oriC.

The protein resides in the cytoplasm. In terms of biological role, plays an essential role in the initiation and regulation of chromosomal replication. ATP-DnaA binds to the origin of replication (oriC) to initiate formation of the DNA replication initiation complex once per cell cycle. Binds the DnaA box (a 9 base pair repeat at the origin) and separates the double-stranded (ds)DNA. Forms a right-handed helical filament on oriC DNA; dsDNA binds to the exterior of the filament while single-stranded (ss)DNA is stabiized in the filament's interior. The ATP-DnaA-oriC complex binds and stabilizes one strand of the AT-rich DNA unwinding element (DUE), permitting loading of DNA polymerase. After initiation quickly degrades to an ADP-DnaA complex that is not apt for DNA replication. Binds acidic phospholipids. The sequence is that of Chromosomal replication initiator protein DnaA from Corynebacterium efficiens (strain DSM 44549 / YS-314 / AJ 12310 / JCM 11189 / NBRC 100395).